Here is a 101-residue protein sequence, read N- to C-terminus: PAT complex subunit Asterix (101 aa).

The segment at 1–26 (MADPRRPARVTRYKPPTTESNPALED) is disordered. Over 1–27 (MADPRRPARVTRYKPPTTESNPALEDP) the chain is Cytoplasmic. A helical membrane pass occupies residues 28 to 46 (TPDYMNLLGMVFSMCGLML). K47 is a topological domain (lumenal). A helical membrane pass occupies residues 48 to 65 (LKWCAWIAVYCSFISFAN). Over 66-69 (SRSS) the chain is Cytoplasmic. Residues 70–90 (EDTKQMMSSFMLSISAVVMSY) traverse the membrane as a helical segment. Over 91–101 (LQNPQPMSPPW) the chain is Lumenal.

The protein belongs to the Asterix family. Component of the multi-pass translocon (MPT) complex.

It localises to the endoplasmic reticulum membrane. In terms of biological role, component of the multi-pass translocon (MPT) complex that mediates insertion of multi-pass membrane proteins into the lipid bilayer of membranes. The MPT complex takes over after the SEC61 complex: following membrane insertion of the first few transmembrane segments of proteins by the SEC61 complex, the MPT complex occludes the lateral gate of the SEC61 complex to promote insertion of subsequent transmembrane regions. The polypeptide is PAT complex subunit Asterix (WDR83OS) (Gallus gallus (Chicken)).